The sequence spans 798 residues: Ubiquitin carboxyl-terminal hydrolase 10 (798 aa).

Ala2 carries the N-acetylalanine modification. The segment at 2–100 (ALHSPQYIFG…ILGCTASKIT (99 aa)) is interaction with p53/TP53. A G3BP1-binding region spans residues 6–21 (PQYIFGDFSPDEFNQF). A Phosphothreonine modification is found at Thr24. Thr42 carries the phosphothreonine; by ATM modification. The residue at position 100 (Thr100) is a Phosphothreonine. Disordered regions lie at residues 139–166 (GVSG…LKDG), 194–257 (AEFM…CFPA), and 307–337 (TESI…LPVS). Residues 205–219 (TPRTCNSPQNSTDSV) are compositionally biased toward polar residues. Phosphoserine occurs at positions 211 and 226. Over residues 307 to 316 (TESIDLDPTK) the composition is skewed to basic and acidic residues. A Phosphoserine modification is found at Ser321. Residues 328 to 337 (GSASGTLPVS) are compositionally biased toward polar residues. Ser337 is modified (phosphoserine; by ATM). A phosphoserine mark is found at Ser365 and Ser370. The region spanning 415–795 (RGLINKGNWC…TAYLLYYRRV (381 aa)) is the USP domain. Cys424 acts as the Nucleophile in catalysis. Position 547 is a phosphoserine (Ser547). The segment covering 551-562 (EKLTISNGPKNH) has biased composition (polar residues). A disordered region spans residues 551-594 (EKLTISNGPKNHSVNEEEQEEQGEGSEDEWEQVGPRNKTSVTRQ). Residues Ser563 and Ser576 each carry the phosphoserine modification. A compositionally biased stretch (acidic residues) spans 566–581 (EEEQEEQGEGSEDEWE). The active-site Proton acceptor is the His749.

Belongs to the peptidase C19 family. USP10 subfamily. As to quaternary structure, found in a deubiquitination complex with TANK, USP10 and ZC3H12A; this complex inhibits genotoxic stress- or interleukin-1-beta (IL1B)-mediated NF-kappa-B activation by promoting IKBKG or TRAF6 deubiquitination. Interacts with IKBKG; this interaction increases in response to DNA damage. Interacts with TANK; this interaction increases in response to DNA damage. Interacts with TRAF6; this interaction increases in response to DNA damage. Interacts with ZC3H12A; this interaction increases in response to DNA damage. Interacts with G3BP1 (via NTF2 domain) and G3BP2 (via NTF2 domain); inhibiting stress granule formation. Phosphorylated by ATM following DNA damage, leading to stabilization and translocation it to the nucleus. Post-translationally, ubiquitinated. Deubiquitinated by USP13. Widely expressed.

Its subcellular location is the cytoplasm. It localises to the nucleus. It is found in the early endosome. It carries out the reaction Thiol-dependent hydrolysis of ester, thioester, amide, peptide and isopeptide bonds formed by the C-terminal Gly of ubiquitin (a 76-residue protein attached to proteins as an intracellular targeting signal).. Its activity is regulated as follows. Specifically inhibited by spautin-1 (specific and potent autophagy inhibitor-1), a derivative of MBCQ that binds to USP10 and inhibits deubiquitinase activity. Regulated by PIK3C3/VPS34-containing complexes. Functionally, hydrolase that can remove conjugated ubiquitin from target proteins such as p53/TP53, RPS2/us5, RPS3/us3, RPS10/eS10, BECN1, SNX3 and CFTR. Acts as an essential regulator of p53/TP53 stability: in unstressed cells, specifically deubiquitinates p53/TP53 in the cytoplasm, leading to counteract MDM2 action and stabilize p53/TP53. Following DNA damage, translocates to the nucleus and deubiquitinates p53/TP53, leading to regulate the p53/TP53-dependent DNA damage response. Component of a regulatory loop that controls autophagy and p53/TP53 levels: mediates deubiquitination of BECN1, a key regulator of autophagy, leading to stabilize the PIK3C3/VPS34-containing complexes. In turn, PIK3C3/VPS34-containing complexes regulate USP10 stability, suggesting the existence of a regulatory system by which PIK3C3/VPS34-containing complexes regulate p53/TP53 protein levels via USP10 and USP13. Does not deubiquitinate MDM2. Plays a key role in 40S ribosome subunit recycling when a ribosome has stalled during translation: acts both by inhibiting formation of stress granules, which store stalled translation pre-initiation complexes, and mediating deubiquitination of 40S ribosome subunits. Acts as a negative regulator of stress granules formation by lowering G3BP1 and G3BP2 valence, thereby preventing G3BP1 and G3BP2 ability to undergo liquid-liquid phase separation (LLPS) and assembly of stress granules. Promotes 40S ribosome subunit recycling following ribosome dissociation in response to ribosome stalling by mediating deubiquitination of 40S ribosomal proteins RPS2/us5, RPS3/us3 and RPS10/eS10, thereby preventing their degradation by the proteasome. Part of a ribosome quality control that takes place when ribosomes have stalled during translation initiation (iRQC): USP10 acts by removing monoubiquitination of RPS2/us5 and RPS3/us3, promoting 40S ribosomal subunit recycling. Deubiquitinates CFTR in early endosomes, enhancing its endocytic recycling. Involved in a TANK-dependent negative feedback response to attenuate NF-kappa-B activation via deubiquitinating IKBKG or TRAF6 in response to interleukin-1-beta (IL1B) stimulation or upon DNA damage. Deubiquitinates TBX21 leading to its stabilization. Plays a negative role in the RLR signaling pathway upon RNA virus infection by blocking the RIGI-mediated MAVS activation. Mechanistically, removes the unanchored 'Lys-63'-linked polyubiquitin chains of MAVS to inhibit its aggregation, essential for its activation. The sequence is that of Ubiquitin carboxyl-terminal hydrolase 10 from Homo sapiens (Human).